A 444-amino-acid chain; its full sequence is Signal recognition particle 54 kDa protein (444 aa).

GTP contacts are provided by residues 102-109 (GVQGSGKT), 184-188 (DTAGR), and 244-247 (SKMD).

It belongs to the GTP-binding SRP family. SRP54 subfamily. In terms of assembly, part of the signal recognition particle protein translocation system, which is composed of SRP and FtsY. Archaeal SRP consists of a 7S RNA molecule of 300 nucleotides and two protein subunits: SRP54 and SRP19.

The protein localises to the cytoplasm. It catalyses the reaction GTP + H2O = GDP + phosphate + H(+). Its function is as follows. Involved in targeting and insertion of nascent membrane proteins into the cytoplasmic membrane. Binds to the hydrophobic signal sequence of the ribosome-nascent chain (RNC) as it emerges from the ribosomes. The SRP-RNC complex is then targeted to the cytoplasmic membrane where it interacts with the SRP receptor FtsY. This is Signal recognition particle 54 kDa protein from Sulfolobus acidocaldarius (strain ATCC 33909 / DSM 639 / JCM 8929 / NBRC 15157 / NCIMB 11770).